The following is a 374-amino-acid chain: Putative heme chaperone HemW-like protein (374 aa).

The Radical SAM core domain maps to 1–231; sequence MKLLGLYINI…EKLLKKSGYK (231 aa).

It belongs to the anaerobic coproporphyrinogen-III oxidase family. HemW subfamily.

The protein resides in the cytoplasm. Might be a heme chaperone; in E.coli heme binds independently of binding to [4Fe-4S] or S-adenosyl-L-methionine. This is Putative heme chaperone HemW-like protein from Buchnera aphidicola subsp. Baizongia pistaciae (strain Bp).